Here is a 497-residue protein sequence, read N- to C-terminus: IWS1-like protein (497 aa).

Positions 1–191 (MSDHEGASPA…SDRRGGRNFE (191 aa)) are disordered. Low complexity-rich tracts occupy residues 7-23 (ASPASSAPSSPLVPVSP) and 47-57 (PLAPRSPASPR). Basic and acidic residues-rich tracts occupy residues 123 to 134 (EGDKQQKRKDLF), 144 to 160 (DRPKKQNDDLDELVKGD), and 181 to 191 (PSDRRGGRNFE). One can recognise a TFIIS N-terminal domain in the interval 281 to 361 (SALSEWLAPL…GEWARPIYHL (81 aa)). The tract at residues 369 to 433 (SRQEREERDY…GDKGYINRAR (65 aa)) is disordered. 2 stretches are compositionally biased toward basic and acidic residues: residues 370–382 (RQEREERDYSRMP) and 401–411 (APKRPRIRDAE).

This sequence belongs to the IWS1 family.

It localises to the nucleus. The polypeptide is IWS1-like protein (Caenorhabditis briggsae).